The chain runs to 116 residues: Large ribosomal subunit protein uL24 (116 aa).

It belongs to the universal ribosomal protein uL24 family. In terms of assembly, part of the 50S ribosomal subunit.

In terms of biological role, one of two assembly initiator proteins, it binds directly to the 5'-end of the 23S rRNA, where it nucleates assembly of the 50S subunit. Functionally, one of the proteins that surrounds the polypeptide exit tunnel on the outside of the subunit. This is Large ribosomal subunit protein uL24 from Protochlamydia amoebophila (strain UWE25).